A 526-amino-acid polypeptide reads, in one-letter code: Cytochrome P450 monooxygenase COX2 (526 aa).

Residue Asn11 is glycosylated (N-linked (GlcNAc...) asparagine). A helical transmembrane segment spans residues 12–31 (ITTNHVAAAVCAGIAVYAIV). Residue Asn302 is glycosylated (N-linked (GlcNAc...) asparagine). Cys450 provides a ligand contact to heme.

The protein belongs to the cytochrome P450 family. Requires heme as cofactor.

Its subcellular location is the membrane. The protein operates within secondary metabolite biosynthesis. Functionally, cytochrome P450 monooxygenase; part of the gene cluster that mediates the biosynthesis of alpha-cuprenene and oxidized derivatives. The alpha-cuprenene synthase COP6 is the only sesquiterpene synthase identified in C.cinereus that appears to be part of a biosynthetic gene cluster and is highly specific since it catalyzes the cyclization of (2E,6E)-farnesyl diphosphate into only one product, alpha-cuprenene. The cytochrome P450 monooxygenase COX2 then oxidizes the cyclohexadiene ring of alpha-cuprenene at positions 1 and 4, yielding first alpha-cuparene, followed by alpha-cuparophenol and a further yet unidentified compound resulting from one additional oxidation step. The cytochrome P450 monooxygenase COX1 then likely catalyzes the oxidation at position 9 of the pentane ring of alpha-cuprenene to give the corresponding hydroxy or ketone derivatives. The chain is Cytochrome P450 monooxygenase COX2 from Coprinopsis cinerea (strain Okayama-7 / 130 / ATCC MYA-4618 / FGSC 9003) (Inky cap fungus).